Consider the following 184-residue polypeptide: Adenine phosphoribosyltransferase (184 aa).

Belongs to the purine/pyrimidine phosphoribosyltransferase family. Homodimer.

The protein resides in the cytoplasm. It catalyses the reaction AMP + diphosphate = 5-phospho-alpha-D-ribose 1-diphosphate + adenine. It functions in the pathway purine metabolism; AMP biosynthesis via salvage pathway; AMP from adenine: step 1/1. Catalyzes a salvage reaction resulting in the formation of AMP, that is energically less costly than de novo synthesis. The protein is Adenine phosphoribosyltransferase of Myxococcus xanthus (strain DK1622).